Reading from the N-terminus, the 490-residue chain is ATP synthase subunit beta, plastid (490 aa).

Residue 170–177 coordinates ATP; that stretch reads GGAGVGKT.

This sequence belongs to the ATPase alpha/beta chains family. In terms of assembly, F-type ATPases have 2 components, CF(1) - the catalytic core - and CF(0) - the membrane proton channel. CF(1) has five subunits: alpha(3), beta(3), gamma(1), delta(1), epsilon(1). CF(0) has four main subunits: a(1), b(1), b'(1) and c(9-12).

It localises to the plastid thylakoid membrane. It carries out the reaction ATP + H2O + 4 H(+)(in) = ADP + phosphate + 5 H(+)(out). Produces ATP from ADP in the presence of a proton gradient across the membrane. The catalytic sites are hosted primarily by the beta subunits. In Cuscuta reflexa (Southern Asian dodder), this protein is ATP synthase subunit beta, plastid.